The chain runs to 195 residues: UPF0316 protein Pcar_2434 (195 aa).

3 helical membrane-spanning segments follow: residues 13–33, 45–65, and 71–91; these read LFLL…IGTL, WAGV…SQVM, and VWTY…GVLI.

Belongs to the UPF0316 family.

Its subcellular location is the cell membrane. The chain is UPF0316 protein Pcar_2434 from Syntrophotalea carbinolica (strain DSM 2380 / NBRC 103641 / GraBd1) (Pelobacter carbinolicus).